The chain runs to 232 residues: Acyl-protein thioesterase 1 (232 aa).

Residues S125, D179, and H212 each act as charge relay system in the active site.

Belongs to the AB hydrolase superfamily. AB hydrolase 2 family.

The protein localises to the cytoplasm. The protein resides in the nucleus. The enzyme catalyses S-hexadecanoyl-L-cysteinyl-[protein] + H2O = L-cysteinyl-[protein] + hexadecanoate + H(+). Hydrolyzes fatty acids from S-acylated cysteine residues in proteins with a strong preference for palmitoylated G-alpha proteins over other acyl substrates. Mediates the deacylation of G-alpha proteins such as GPA1 in vivo, but has weak or no activity toward palmitoylated Ras proteins. Has weak lysophospholipase activity in vitro; however such activity may not exist in vivo. The protein is Acyl-protein thioesterase 1 of Debaryomyces hansenii (strain ATCC 36239 / CBS 767 / BCRC 21394 / JCM 1990 / NBRC 0083 / IGC 2968) (Yeast).